Here is a 737-residue protein sequence, read N- to C-terminus: Polyribonucleotide nucleotidyltransferase (737 aa).

Positions 489 and 495 each coordinate Mg(2+). Positions 556-615 (PKIDTIKIDVDKIKIVIGKGGETIDKIIAETGVKIDIDEEGNVSIYSSDQDAINRAKEII) constitute a KH domain. Positions 625 to 693 (DEVYRAKVVR…EKGRIDASMK (69 aa)) constitute an S1 motif domain. The disordered stretch occupies residues 691–737 (SMKALLPRPPKPEHDEKGEKSERPHRPRHHKDHKPKKEFTETPKDSE). Positions 700 to 714 (PKPEHDEKGEKSERP) are enriched in basic and acidic residues. The span at 715–724 (HRPRHHKDHK) shows a compositional bias: basic residues. Over residues 725-737 (PKKEFTETPKDSE) the composition is skewed to basic and acidic residues.

The protein belongs to the polyribonucleotide nucleotidyltransferase family. The cofactor is Mg(2+).

It is found in the cytoplasm. The catalysed reaction is RNA(n+1) + phosphate = RNA(n) + a ribonucleoside 5'-diphosphate. Its function is as follows. Involved in mRNA degradation. Catalyzes the phosphorolysis of single-stranded polyribonucleotides processively in the 3'- to 5'-direction. The chain is Polyribonucleotide nucleotidyltransferase from Streptococcus pneumoniae (strain Taiwan19F-14).